Consider the following 98-residue polypeptide: Large ribosomal subunit protein bL28 (98 aa).

This sequence belongs to the bacterial ribosomal protein bL28 family.

The protein is Large ribosomal subunit protein bL28 of Rhizobium etli (strain ATCC 51251 / DSM 11541 / JCM 21823 / NBRC 15573 / CFN 42).